Reading from the N-terminus, the 576-residue chain is Immunoglobulin mu heavy chain (576 aa).

Position 1 is a pyrrolidone carboxylic acid (Gln-1). Ig-like domains are found at residues 1-97 (QVTL…TYYC), 132-212 (PTLF…EHVC), 236-334 (PKVS…QNAS), 352-442 (PSFA…QTIS), and 452-553 (PDVY…RTVD). Residues 1–124 (QVTLTESGPA…VWGKGTTVTV (124 aa)) are variable (V) domain, involved in antigen recognition. 3 disulfide bridges follow: Cys-22-Cys-97, Cys-153-Cys-212, and Cys-259-Cys-320. N-linked (GlcNAc...) asparagine glycosylation is found at Asn-74 and Asn-170. The interval 125-576 (SSGSASAPTL…VMSDTAGTCY (452 aa)) is constant (C) domain. N-linked (GlcNAc...) asparagine glycans are attached at residues Asn-332, Asn-395, and Asn-402. Intrachain disulfides connect Cys-367–Cys-426 and Cys-474–Cys-536. Asn-563 carries N-linked (GlcNAc...) asparagine glycosylation.

As to quaternary structure, immunoglobulins are composed of two identical heavy chains and two identical light chains; disulfide-linked. It is found almost exclusively as a homopentamer in the serum. Membrane-bound IgM molecules are non-covalently associated with heterodimer of CD79A and CD79B.

The protein resides in the secreted. Its subcellular location is the cell membrane. Its function is as follows. Immunoglobulins, also known as antibodies, are membrane-bound or secreted glycoproteins produced by B lymphocytes. In the recognition phase of humoral immunity, the membrane-bound immunoglobulins serve as receptors which, upon binding of a specific antigen, trigger the clonal expansion and differentiation of B lymphocytes into immunoglobulins-secreting plasma cells. Secreted immunoglobulins mediate the effector phase of humoral immunity, which results in the elimination of bound antigens. The antigen binding site is formed by the variable domain of one heavy chain, together with that of its associated light chain. Thus, each immunoglobulin has two antigen binding sites with remarkable affinity for a particular antigen. The variable domains are assembled by a process called V-(D)-J rearrangement and can then be subjected to somatic hypermutations which, after exposure to antigen and selection, allow affinity maturation for a particular antigen. IgM antibodies play an important role in primary defense mechanisms. They have been shown to be involved in early recognition of external invaders like bacteria and viruses, cellular waste and modified self, as well as in recognition and elimination of precancerous and cancerous lesions. The membrane-bound form is found in the majority of normal B cells alongside with IgD. Membrane-bound IgM induces the phosphorylation of CD79A and CD79B by the Src family of protein tyrosine kinases. It may cause death of cells by apoptosis. It is also found in soluble form, which represents about 30% of the total serum immunoglobulins where it is found almost exclusively as a homopentamer. After the antigen binds to the B cell receptor, the secreted form is secreted in large amounts (, PubMed:16895553). The sequence is that of Immunoglobulin mu heavy chain from Homo sapiens (Human).